We begin with the raw amino-acid sequence, 155 residues long: MFTIDFSDHTGLVKDAWYKQIEDLLEFAKKEEHIEDDAELSVTFVDKQEIQEINRTYRDKDKVTDVISFALEEDEPEIDFSGLDIPRVLGDIIICTDVAQEQANNYGHSFERELGFLALHGFLHLLGYDHMTEADEKEMFGRQDTILNAYGLTRD.

H120, H124, and H130 together coordinate Zn(2+).

This sequence belongs to the endoribonuclease YbeY family. Zn(2+) serves as cofactor.

It is found in the cytoplasm. Functionally, single strand-specific metallo-endoribonuclease involved in late-stage 70S ribosome quality control and in maturation of the 3' terminus of the 16S rRNA. This Staphylococcus aureus (strain Mu3 / ATCC 700698) protein is Endoribonuclease YbeY.